A 90-amino-acid chain; its full sequence is Small ribosomal subunit protein bS16 (90 aa).

This sequence belongs to the bacterial ribosomal protein bS16 family.

The sequence is that of Small ribosomal subunit protein bS16 from Lactobacillus acidophilus (strain ATCC 700396 / NCK56 / N2 / NCFM).